Consider the following 428-residue polypeptide: GTPase Obg (428 aa).

The 158-residue stretch at 1–158 folds into the Obg domain; the sequence is MFVDQVKIYV…RDVILELKVL (158 aa). The region spanning 159–329 is the OBG-type G domain; sequence ADVGLVGFPS…LLFEVANLIE (171 aa). GTP-binding positions include 165 to 172, 190 to 194, 212 to 215, 282 to 285, and 310 to 312; these read GFPSVGKS, FTTIV, DLPG, NKMD, and SAV. 2 residues coordinate Mg(2+): S172 and T192. Residues 350–428 enclose the OCT domain; the sequence is KFDTEGVKFE…ILEYEFEFID (79 aa).

This sequence belongs to the TRAFAC class OBG-HflX-like GTPase superfamily. OBG GTPase family. As to quaternary structure, monomer. Mg(2+) serves as cofactor.

The protein resides in the cytoplasm. Its function is as follows. An essential GTPase which binds GTP, GDP and possibly (p)ppGpp with moderate affinity, with high nucleotide exchange rates and a fairly low GTP hydrolysis rate. Plays a role in control of the cell cycle, stress response, ribosome biogenesis and in those bacteria that undergo differentiation, in morphogenesis control. The protein is GTPase Obg of Bacillus cereus (strain ATCC 14579 / DSM 31 / CCUG 7414 / JCM 2152 / NBRC 15305 / NCIMB 9373 / NCTC 2599 / NRRL B-3711).